Consider the following 73-residue polypeptide: Cell division protein ZapB (73 aa).

Residues 3-67 (LELLSKLETK…WNDKVTGLVG (65 aa)) are a coiled coil.

Belongs to the ZapB family. As to quaternary structure, homodimer. The ends of the coiled-coil dimer bind to each other, forming polymers. Interacts with FtsZ.

It is found in the cytoplasm. Functionally, non-essential, abundant cell division factor that is required for proper Z-ring formation. It is recruited early to the divisome by direct interaction with FtsZ, stimulating Z-ring assembly and thereby promoting cell division earlier in the cell cycle. Its recruitment to the Z-ring requires functional FtsA or ZipA. This Shewanella sp. (strain MR-4) protein is Cell division protein ZapB.